The sequence spans 425 residues: Glutamyl-tRNA reductase (425 aa).

Residues 49–52, Ser-106, 111–113, and Gln-117 contribute to the substrate site; these read TCNR and EPQ. Cys-50 serves as the catalytic Nucleophile. 186 to 191 provides a ligand contact to NADP(+); it reads GAGETI.

This sequence belongs to the glutamyl-tRNA reductase family. As to quaternary structure, homodimer.

The catalysed reaction is (S)-4-amino-5-oxopentanoate + tRNA(Glu) + NADP(+) = L-glutamyl-tRNA(Glu) + NADPH + H(+). The protein operates within porphyrin-containing compound metabolism; protoporphyrin-IX biosynthesis; 5-aminolevulinate from L-glutamyl-tRNA(Glu): step 1/2. In terms of biological role, catalyzes the NADPH-dependent reduction of glutamyl-tRNA(Glu) to glutamate 1-semialdehyde (GSA). This chain is Glutamyl-tRNA reductase, found in Saccharophagus degradans (strain 2-40 / ATCC 43961 / DSM 17024).